Here is a 734-residue protein sequence, read N- to C-terminus: 5-methyltetrahydropteroyltriglutamate--homocysteine methyltransferase (734 aa).

5-methyltetrahydropteroyltri-L-glutamate-binding positions include 15-18 (REFK) and Lys104. Residues 409 to 411 (IGS) and Glu462 contribute to the L-homocysteine site. L-methionine is bound by residues 409-411 (IGS) and Glu462. Residues 493–494 (RC) and Trp539 each bind 5-methyltetrahydropteroyltri-L-glutamate. Asp577 contacts L-homocysteine. Position 577 (Asp577) interacts with L-methionine. Glu583 serves as a coordination point for 5-methyltetrahydropteroyltri-L-glutamate. Residues His618, Cys620, and Glu642 each coordinate Zn(2+). The active-site Proton donor is His672. Cys704 lines the Zn(2+) pocket.

Belongs to the vitamin-B12 independent methionine synthase family. The cofactor is Zn(2+).

It catalyses the reaction 5-methyltetrahydropteroyltri-L-glutamate + L-homocysteine = tetrahydropteroyltri-L-glutamate + L-methionine. The protein operates within amino-acid biosynthesis; L-methionine biosynthesis via de novo pathway; L-methionine from L-homocysteine (MetE route): step 1/1. Functionally, catalyzes the transfer of a methyl group from 5-methyltetrahydrofolate to homocysteine resulting in methionine formation. The protein is 5-methyltetrahydropteroyltriglutamate--homocysteine methyltransferase of Thermotoga maritima (strain ATCC 43589 / DSM 3109 / JCM 10099 / NBRC 100826 / MSB8).